A 1670-amino-acid chain; its full sequence is Collagen alpha-3(IV) chain (1670 aa).

Positions 1 to 28 (MSARTAPRPQVLLLPLLLVLLAAAPAAS) are cleaved as a signal peptide. Residues 29-42 (KGCVCKDKGQCFCD) form a 7S domain region. Residues 43–1438 (GAKGEKGEKG…KGKRGDSGSP (1396 aa)) are triple-helical region. Disordered regions lie at residues 49-78 (GEKG…QGPK), 167-469 (LDAK…DGPK), and 502-1442 (GRQG…ATWT). Residues 176–200 (PGAPGPQGLPGPPGFPGPVGPPGPP) are compositionally biased toward pro residues. A compositionally biased stretch (low complexity) spans 202–212 (FFGFPGAMGPR). Residues 217–231 (HMGERVIGHKGERGV) show a composition bias toward basic and acidic residues. A compositionally biased stretch (low complexity) spans 242-251 (GTVIVTLTGP). An N-linked (GlcNAc...) asparagine glycan is attached at N253. Over residues 253 to 266 (NRTDLKGEKGDKGA) the composition is skewed to basic and acidic residues. Residues 382–394 (SPGSSRPGLRGAP) show a composition bias toward low complexity. Residues 402-411 (SKGERGRPGK) show a composition bias toward basic and acidic residues. Residues 415 to 428 (GTPGSPGCAGSPGL) are compositionally biased toward low complexity. Pro residues-rich tracts occupy residues 429 to 438 (PGSPGPPGPP), 598 to 618 (PGDP…PPGY), and 654 to 675 (VPGP…PPGI). The Cell attachment site signature appears at 791–793 (RGD). Positions 900–909 (IGPPGPPGNP) are enriched in pro residues. The segment covering 974-987 (VPGMPGLKGLKGLP) has biased composition (low complexity). Positions 996-998 (RGD) match the Cell attachment site motif. Composition is skewed to low complexity over residues 1013 to 1025 (IPGS…MPGS), 1094 to 1105 (LGPAGPEGAPGS), and 1118 to 1133 (HGDL…LGPP). Positions 1135-1148 (IRGPPGLPGFPGSP) are enriched in pro residues. A Cell attachment site motif is present at residues 1154–1156 (RGD). 2 stretches are compositionally biased toward low complexity: residues 1230–1250 (PGAI…RGSP) and 1290–1299 (PPGRLGAPGT). The short motif at 1306-1308 (RGD) is the Cell attachment site element. A compositionally biased stretch (pro residues) spans 1332–1341 (PPGPIGPKGP). 2 consecutive short sequence motifs (cell attachment site) follow at residues 1345-1347 (RGD) and 1432-1434 (RGD). The interval 1427–1444 (GLKGKRGDSGSPATWTTR) is epitope recognized by Goodpasture antibodies. Residues 1445 to 1669 (GFVFTRHSQT…SRCQVCMKKR (225 aa)) form the Collagen IV NC1 domain. 6 cysteine pairs are disulfide-bonded: C1460–C1551, C1493–C1548, C1505–C1511, C1570–C1665, C1604–C1662, and C1616–C1622. Residues 1479-1557 (NQRAHGQDLG…CTVCEGPAIA (79 aa)) are required for the anti-angiogenic activity of tumstatin. An S-Lysyl-methionine sulfilimine (Met-Lys) (interchain with K-1651) cross-link involves residue M1533. The interval 1610–1628 (ASPFLECHGRGTCNYYSNS) is required for the anti-tumor cell activity of tumstatin. An S-Lysyl-methionine sulfilimine (Lys-Met) (interchain with M-1533) cross-link involves residue K1651.

This sequence belongs to the type IV collagen family. As to quaternary structure, there are six type IV collagen isoforms, alpha 1(IV)-alpha 6(IV), each of which can form a triple helix structure with 2 other chains to generate type IV collagen network. The alpha 3(IV) chain forms a triple helical protomer with alpha 4(IV) and alpha 5(IV); this triple helical structure dimerizes through NC1-NC1 domain interactions such that the alpha 3(IV), alpha 4(IV) and alpha 5(IV) chains of one protomer connect with the alpha 5(IV), alpha 4(IV) and alpha 3(IV) chains of the opposite promoter, respectively. Interacts with ITGB3. Associates with LAMB2 at the neuromuscular junction and in GBM. Post-translationally, prolines at the third position of the tripeptide repeating unit (G-X-Y) are hydroxylated in some or all of the chains. In terms of processing, isoform 2 contains an additional N-linked glycosylation site. Type IV collagens contain numerous cysteine residues which are involved in inter- and intramolecular disulfide bonding. 12 of these, located in the NC1 domain, are conserved in all known type IV collagens. Post-translationally, the trimeric structure of the NC1 domains is stabilized by covalent bonds between Lys and Met residues. In terms of processing, phosphorylated. Thought to be phosphorylated by CERT, but CERT does not have kinase activity. As to expression, alpha 3 and alpha 4 type IV collagens are colocalized and present in kidney, eye, basement membranes of lens capsule, cochlea, lung, skeletal muscle, aorta, synaptic fibers, fetal kidney and fetal lung. PubMed:8083201 reports similar levels of expression of alpha 3 and alpha 4 type IV collagens in kidney, but PubMed:7523402 reports that in kidney levels of alpha 3 type IV collagen are significantly lower than those of alpha 4 type IV collagen. According to PubMed:8083201, alpha 3 type IV collagen is not detected in heart, brain, placenta, liver, pancreas, extrasynaptic muscle fibers, endoneurial and perineurial nerves, fetal brain, fetal heart and fetal liver. According to PubMed:7523402, alpha 3 type IV collagen is strongly expressed in pancreas, neuroretina and calvaria and not expressed in adrenal, ileum and skin. Isoform 1 and isoform 3 are strongly expressed in kidney, lung, suprarenal capsule, muscle and spleen, in each of these tissues isoform 1 is more abundant than isoform 3. Isoform 1 and isoform 3 are expressed at low levels in artery, fat, pericardium and peripherical nerve, but not in placenta, mesangium, skin, pleura and cultured umbilical endothelial cells.

Its subcellular location is the secreted. The protein resides in the extracellular space. It is found in the extracellular matrix. The protein localises to the basement membrane. In terms of biological role, type IV collagen is the major structural component of glomerular basement membranes (GBM), forming a 'chicken-wire' meshwork together with laminins, proteoglycans and entactin/nidogen. Its function is as follows. Tumstatin, a cleavage fragment corresponding to the collagen alpha 3(IV) NC1 domain, possesses both anti-angiogenic and anti-tumor cell activity; these two anti-tumor properties may be regulated via RGD-independent ITGB3-mediated mechanisms. This Homo sapiens (Human) protein is Collagen alpha-3(IV) chain (COL4A3).